A 326-amino-acid chain; its full sequence is (+)-T-muurolol synthase ((2E,6E)-farnesyl diphosphate cyclizing) (326 aa).

Mg(2+) is bound by residues Asp-81 and Asp-85. The short motif at 81–85 (DDQCD) is the DDXXD motif element. Arg-175 serves as a coordination point for substrate. Mg(2+) is bound by residues Asn-221 and Ser-225. Lys-228 contributes to the substrate binding site. Mg(2+) is bound at residue Glu-229. 309–310 (RY) serves as a coordination point for substrate.

It belongs to the terpene synthase family. Mg(2+) is required as a cofactor.

The enzyme catalyses (2E,6E)-farnesyl diphosphate + H2O = (+)-T-muurolol + diphosphate. Its pathway is secondary metabolite biosynthesis; terpenoid biosynthesis. Its function is as follows. Catalyzes the conversion of (2E,6E)-farnesyl diphosphate (FPP) into (+)-T-muurolol via a 1,10-cyclization, which requires isomerization of FPP to nerolidyl diphosphate (NPP) and then abstraction of the pyrophosphate from intermediate NPP leading to a (E,Z)-germacradienyl (helminthogermacradienyl) cation. The polypeptide is (+)-T-muurolol synthase ((2E,6E)-farnesyl diphosphate cyclizing) (Roseiflexus castenholzii (strain DSM 13941 / HLO8)).